A 484-amino-acid polypeptide reads, in one-letter code: ATP-dependent RNA helicase DDX25 (484 aa).

Threonine 49 is modified (phosphothreonine). The Nuclear export signal signature appears at 62-75; it reads LAANSLLNKLIRQS. The Q motif signature appears at 98 to 126; that stretch reads KTFEELRLKEELLKGIYAMGFNRPSKIQE. The Nuclear localization signal motif lies at 101 to 115; it reads EELRLKEELLKGIYA. The Helicase ATP-binding domain maps to 131-301; the sequence is MMLAHPPQNL…ERIIPDPNVI (171 aa). Residue 144–151 participates in ATP binding; that stretch reads SQSGTGKT. The short motif at 248 to 251 is the DEAD box element; the sequence is DEAD. A Helicase C-terminal domain is found at 312–479; it reads NIRQYYVLCE…QLDPEDMDEI (168 aa).

The protein belongs to the DEAD box helicase family. Phosphorylated on threonine residues. The phosphorylated form is found in the cytoplasm but not in the nucleus. In terms of tissue distribution, isoform 1 is expressed in germ cells. Isoform 2 is expressed in Leydig cells and in round spermatids of adult testis upon gonadotropin stimulation.

The protein resides in the cytoplasm. Its subcellular location is the nucleus. The enzyme catalyses ATP + H2O = ADP + phosphate + H(+). Functionally, ATP-dependent RNA helicase. Required for mRNA export and translation regulation during spermatid development. This is ATP-dependent RNA helicase DDX25 (Ddx25) from Mus musculus (Mouse).